An 832-amino-acid polypeptide reads, in one-letter code: Protein P (832 aa).

Residues 1-177 (MPLSYQHFRK…FCGSPYSWEQ (177 aa)) are terminal protein domain (TP). Positions 178 to 335 (ELQHGAESFH…YCLSHLVSLL (158 aa)) are spacer. Positions 336–679 (DDWGPCTEHG…YSTLYPVARQ (344 aa)) are polymerase/reverse transcriptase domain (RT). One can recognise a Reverse transcriptase domain in the interval 346-589 (EHHIRIPRTP…YSLHFMGYVI (244 aa)). Positions 418, 540, and 541 each coordinate Mg(2+).

It belongs to the hepadnaviridae P protein family.

The enzyme catalyses DNA(n) + a 2'-deoxyribonucleoside 5'-triphosphate = DNA(n+1) + diphosphate. The catalysed reaction is Endonucleolytic cleavage to 5'-phosphomonoester.. With respect to regulation, activated by host HSP70 and HSP40 in vitro to be able to bind the epsilon loop of the pgRNA. Because deletion of the RNase H region renders the protein partly chaperone-independent, the chaperones may be needed indirectly to relieve occlusion of the RNA-binding site by this domain. Inhibited by several reverse-transcriptase inhibitors: Lamivudine, Adefovir and Entecavir. In terms of biological role, multifunctional enzyme that converts the viral RNA genome into dsDNA in viral cytoplasmic capsids. This enzyme displays a DNA polymerase activity that can copy either DNA or RNA templates, and a ribonuclease H (RNase H) activity that cleaves the RNA strand of RNA-DNA heteroduplexes in a partially processive 3'- to 5'-endonucleasic mode. Neo-synthesized pregenomic RNA (pgRNA) are encapsidated together with the P protein, and reverse-transcribed inside the nucleocapsid. Initiation of reverse-transcription occurs first by binding the epsilon loop on the pgRNA genome, and is initiated by protein priming, thereby the 5'-end of (-)DNA is covalently linked to P protein. Partial (+)DNA is synthesized from the (-)DNA template and generates the relaxed circular DNA (RC-DNA) genome. After budding and infection, the RC-DNA migrates in the nucleus, and is converted into a plasmid-like covalently closed circular DNA (cccDNA). The activity of P protein does not seem to be necessary for cccDNA generation, and is presumably released from (+)DNA by host nuclear DNA repair machinery. This is Protein P from Pan troglodytes (Chimpanzee).